The chain runs to 690 residues: Methionine--tRNA ligase (690 aa).

A 'HIGH' region motif is present at residues 12 to 22 (PYANGPLHLGH). The Zn(2+) site is built by Cys144, Cys147, Cys157, and Cys160. The 'KMSKS' region signature appears at 333 to 337 (QFSKS). ATP is bound at residue Lys336. The tRNA-binding domain occupies 535 to 632 (KKINIDLMVG…VNADDGSRMK (98 aa)).

The protein belongs to the class-I aminoacyl-tRNA synthetase family. MetG type 1 subfamily. As to quaternary structure, homodimer. Zn(2+) serves as cofactor.

The protein localises to the cytoplasm. The enzyme catalyses tRNA(Met) + L-methionine + ATP = L-methionyl-tRNA(Met) + AMP + diphosphate. Its function is as follows. Is required not only for elongation of protein synthesis but also for the initiation of all mRNA translation through initiator tRNA(fMet) aminoacylation. The sequence is that of Methionine--tRNA ligase from Picrophilus torridus (strain ATCC 700027 / DSM 9790 / JCM 10055 / NBRC 100828 / KAW 2/3).